The primary structure comprises 160 residues: Cytochrome b6-f complex subunit 4 (160 aa).

3 consecutive transmembrane segments (helical) span residues 36-56 (LLYI…GLAV), 95-115 (LLGV…PFIE), and 131-151 (AVFL…TFPI).

This sequence belongs to the cytochrome b family. PetD subfamily. The 4 large subunits of the cytochrome b6-f complex are cytochrome b6, subunit IV (17 kDa polypeptide, petD), cytochrome f and the Rieske protein, while the 4 small subunits are petG, petL, petM and petN. The complex functions as a dimer.

The protein resides in the plastid. The protein localises to the cyanelle thylakoid membrane. Component of the cytochrome b6-f complex, which mediates electron transfer between photosystem II (PSII) and photosystem I (PSI), cyclic electron flow around PSI, and state transitions. This chain is Cytochrome b6-f complex subunit 4, found in Cyanophora paradoxa.